A 284-amino-acid chain; its full sequence is Protein-S-isoprenylcysteine O-methyltransferase (284 aa).

Residues 1–16 (MAGCAARVPPGSEARL) lie on the Cytoplasmic side of the membrane. A helical membrane pass occupies residues 17-33 (SLATFLLGASVLALPLL). The Lumenal segment spans residues 34 to 41 (TRAGLQGR). Residues 42–59 (TGLALYVAGLNALLLLLY) form a helical membrane-spanning segment. Over 60 to 69 (RPPRYQIAIR) the chain is Cytoplasmic. A helical membrane pass occupies residues 70–87 (ACFLGFVFGCGVLLSFSQ). Topologically, residues 88-92 (SSWNH) are lumenal. Residues 93 to 112 (FGWYVCSLSLFHYSEYLVTA) traverse the membrane as a helical segment. Residues 113 to 131 (VNNPKSLSLDSFLLNHSLE) are Cytoplasmic-facing. The chain crosses the membrane as a helical span at residues 132–149 (YTVAALSSWIEFTLENIF). At 150-154 (WPELK) the chain is on the lumenal side. The helical transmembrane segment at 155–174 (QITWLSAAGLLMVIFGECLR) threads the bilayer. At 175–212 (KVAMFTAGSNFNHVVQSEKSDTHTLVTSGVYAWCRHPS) the chain is on the cytoplasmic side. Residues Gln-190, 197 to 200 (HTLV), Tyr-205, and 210 to 213 (HPSY) contribute to the S-adenosyl-L-methionine site. A helical transmembrane segment spans residues 213–228 (YVGWFYWSIGTQVMLC). Asn-229 is a topological domain (lumenal). A helical transmembrane segment spans residues 230 to 244 (PICGVVYALTVWRFF). At 245–284 (RDRTEEEEISLIHFFGEEYLDYKKRVPTGLPFIKGVKVGL) the chain is on the cytoplasmic side. Arg-247 contributes to the substrate binding site. Position 251 (Glu-251) interacts with S-adenosyl-L-methionine.

The protein belongs to the class VI-like SAM-binding methyltransferase superfamily. Isoprenylcysteine carboxyl methyltransferase family.

It is found in the endoplasmic reticulum membrane. The enzyme catalyses [protein]-C-terminal S-[(2E,6E)-farnesyl]-L-cysteine + S-adenosyl-L-methionine = [protein]-C-terminal S-[(2E,6E)-farnesyl]-L-cysteine methyl ester + S-adenosyl-L-homocysteine. In terms of biological role, catalyzes the post-translational methylation of isoprenylated C-terminal cysteine residues. The chain is Protein-S-isoprenylcysteine O-methyltransferase from Rattus norvegicus (Rat).